The following is a 263-amino-acid chain: uncharacterized protein (263 aa).

12–19 provides a ligand contact to ATP; it reads KGGVGKTT.

The protein belongs to the ParA family. MinD subfamily.

This is an uncharacterized protein from Methanocaldococcus jannaschii (strain ATCC 43067 / DSM 2661 / JAL-1 / JCM 10045 / NBRC 100440) (Methanococcus jannaschii).